The following is a 393-amino-acid chain: NAD(P)H-quinone oxidoreductase subunit H, chloroplastic (393 aa).

Belongs to the complex I 49 kDa subunit family. NDH is composed of at least 16 different subunits, 5 of which are encoded in the nucleus.

The protein resides in the plastid. Its subcellular location is the chloroplast thylakoid membrane. It carries out the reaction a plastoquinone + NADH + (n+1) H(+)(in) = a plastoquinol + NAD(+) + n H(+)(out). The enzyme catalyses a plastoquinone + NADPH + (n+1) H(+)(in) = a plastoquinol + NADP(+) + n H(+)(out). Its function is as follows. NDH shuttles electrons from NAD(P)H:plastoquinone, via FMN and iron-sulfur (Fe-S) centers, to quinones in the photosynthetic chain and possibly in a chloroplast respiratory chain. The immediate electron acceptor for the enzyme in this species is believed to be plastoquinone. Couples the redox reaction to proton translocation, and thus conserves the redox energy in a proton gradient. This Guizotia abyssinica (Niger) protein is NAD(P)H-quinone oxidoreductase subunit H, chloroplastic.